The following is a 374-amino-acid chain: F-box/LRR-repeat protein 8 (374 aa).

In terms of domain architecture, F-box spans 2-48; the sequence is AEPGEQLPEEVLALIFRHLPLPDRAAAARVCRAWAAAATCSAVWHDT.

Directly interacts with SKP1 and CUL1.

In terms of biological role, substrate-recognition component of the SCF (SKP1-CUL1-F-box protein)-type E3 ubiquitin ligase complex. In Bos taurus (Bovine), this protein is F-box/LRR-repeat protein 8 (FBXL8).